We begin with the raw amino-acid sequence, 223 residues long: Translation initiation factor 6 (223 aa).

Belongs to the eIF-6 family. Associates with the 50S ribosomal subunit, specifically with protein L14. Binds to 23S rRNA, possibly between where the 30S and 50S subunits associate to initiate translation. In terms of processing, modified in an unknown fashion (not phosphorylation) following release from 50S ribosomal subunits.

Its function is as follows. Binds to the 50S ribosomal subunit and prevents its association with the 30S ribosomal subunit to form the 70S initiation complex. Inhibits translation of both leadered and leaderless mRNAs, maybe by binding to the 50S ribosome subunit, preventing it from binding to the 30S subunit. In Saccharolobus solfataricus (strain ATCC 35092 / DSM 1617 / JCM 11322 / P2) (Sulfolobus solfataricus), this protein is Translation initiation factor 6.